We begin with the raw amino-acid sequence, 173 residues long: Ribulose bisphosphate carboxylase small subunit, chloroplastic 1 (173 aa).

Residues 1–49 constitute a chloroplast transit peptide; sequence MASIPATVATVAQANMVAPFTGLKANAAFPVTKKVNDFSTLPSNGGRVQ.

This sequence belongs to the RuBisCO small chain family. In terms of assembly, heterohexadecamer of 8 large and 8 small subunits.

Its subcellular location is the plastid. The protein resides in the chloroplast. Its function is as follows. RuBisCO catalyzes two reactions: the carboxylation of D-ribulose 1,5-bisphosphate, the primary event in carbon dioxide fixation, as well as the oxidative fragmentation of the pentose substrate. Both reactions occur simultaneously and in competition at the same active site. Although the small subunit is not catalytic it is essential for maximal activity. This chain is Ribulose bisphosphate carboxylase small subunit, chloroplastic 1, found in Flaveria pringlei.